A 319-amino-acid chain; its full sequence is tRNA-cytidine(32) 2-sulfurtransferase (319 aa).

A PP-loop motif motif is present at residues 49 to 54 (SGGKDS). [4Fe-4S] cluster-binding residues include Cys-124, Cys-127, and Cys-215. The tract at residues 276–319 (DGDTAFDKEEFRDPAPDADDVEDAPKKRTISILDSRGKESGCGA) is disordered. Composition is skewed to basic and acidic residues over residues 280 to 290 (AFDKEEFRDPA) and 310 to 319 (SRGKESGCGA).

This sequence belongs to the TtcA family. In terms of assembly, homodimer. Requires Mg(2+) as cofactor. [4Fe-4S] cluster serves as cofactor.

The protein resides in the cytoplasm. It catalyses the reaction cytidine(32) in tRNA + S-sulfanyl-L-cysteinyl-[cysteine desulfurase] + AH2 + ATP = 2-thiocytidine(32) in tRNA + L-cysteinyl-[cysteine desulfurase] + A + AMP + diphosphate + H(+). It functions in the pathway tRNA modification. Catalyzes the ATP-dependent 2-thiolation of cytidine in position 32 of tRNA, to form 2-thiocytidine (s(2)C32). The sulfur atoms are provided by the cysteine/cysteine desulfurase (IscS) system. This is tRNA-cytidine(32) 2-sulfurtransferase from Chromobacterium violaceum (strain ATCC 12472 / DSM 30191 / JCM 1249 / CCUG 213 / NBRC 12614 / NCIMB 9131 / NCTC 9757 / MK).